A 379-amino-acid polypeptide reads, in one-letter code: Galactose-1-phosphate uridylyltransferase (379 aa).

The disordered stretch occupies residues 1 to 21 (MSRSGTDPQQRQQASEADAAA). The span at 9–21 (QQRQQASEADAAA) shows a compositional bias: low complexity. Cysteine 75 is a binding site for Zn(2+). Residues alanine 81, 97 to 98 (ND), and asparagine 173 each bind UDP-alpha-D-glucose. Histidine 184 is a binding site for Zn(2+). Residue histidine 186 is the Tele-UMP-histidine intermediate of the active site. Glutamine 188 provides a ligand contact to UDP-alpha-D-glucose. Positions 202, 301, 319, and 321 each coordinate Zn(2+). Residues 334 to 337 (KFMV) and 339 to 340 (YE) contribute to the UDP-alpha-D-glucose site.

Belongs to the galactose-1-phosphate uridylyltransferase type 1 family. In terms of assembly, homodimer. Requires Zn(2+) as cofactor.

The enzyme catalyses alpha-D-galactose 1-phosphate + UDP-alpha-D-glucose = alpha-D-glucose 1-phosphate + UDP-alpha-D-galactose. Its pathway is carbohydrate metabolism; galactose metabolism. Its function is as follows. Plays an important role in galactose metabolism. The protein is Galactose-1-phosphate uridylyltransferase (GALT) of Homo sapiens (Human).